The chain runs to 149 residues: Endothelin-1 (149 aa).

The propeptide occupies 1 to 33 (AAETVVSGAELSLTANSGGEKTPPHAPGLLRRS). The tract at residues 6-26 (VSGAELSLTANSGGEKTPPHA) is disordered. 2 disulfide bridges follow: C36–C50 and C38–C46. Positions 57–149 (VNTPGHIAPY…ISQQLGNGKK (93 aa)) are excised as a propeptide. An endothelin-like region spans residues 93–107 (CQCANQKDKKCWNFC).

The protein belongs to the endothelin/sarafotoxin family.

The protein resides in the secreted. In terms of biological role, endothelins are endothelium-derived vasoconstrictor peptides. Probable ligand for G-protein coupled receptors EDNRA and EDNRB which activates PTK2B, BCAR1, BCAR3 and, GTPases RAP1 and RHOA cascade in glomerular mesangial cells. Also binds the DEAR/FBXW7-AS1 receptor. Promotes mesenteric arterial wall remodeling via activation of ROCK signaling and subsequent colocalization of NFATC3 with F-actin filaments. NFATC3 then translocates to the nucleus where it subsequently promotes the transcription of the smooth muscle hypertrophy and differentiation marker ACTA2. This Cavia porcellus (Guinea pig) protein is Endothelin-1 (EDN1).